Reading from the N-terminus, the 454-residue chain is Trichosetin biosynthesis cluster transcription factor TF22 (454 aa).

Residues C13–C47 constitute a DNA-binding region (zn(2)-C6 fungal-type). Residues P51–G89 are disordered. Residues R52–G61 show a composition bias toward polar residues. Positions N63–P74 are enriched in basic and acidic residues.

Its subcellular location is the nucleus. Transcription factor that regulates the expression of the gene cluster that mediates the biosynthesis of trichosetin, a trans-fused decalin-containing tetramic acid with antimicrobial activity. Directly activates expression of only the three biosynthetic genes PKS-NRPS1, DA and ER, while TF23 and MFS-T are induced by the final product trichosetin and not by TF22. The protein is Trichosetin biosynthesis cluster transcription factor TF22 of Gibberella fujikuroi (strain CBS 195.34 / IMI 58289 / NRRL A-6831) (Bakanae and foot rot disease fungus).